The primary structure comprises 350 residues: Secreted effector protein PipB2 (350 aa).

4 Pentapeptide repeat domains span residues 162–201 (ANLT…NLSG), 202–241 (TSLG…SLLG), 247–286 (CNCS…IMED), and 287–326 (AVLT…TLTH).

As to quaternary structure, interacts with the host kinesin light chain (KLC), a subunit of the kinesin-1 motor complex.

The protein localises to the secreted. Its subcellular location is the host membrane. In terms of biological role, effector proteins function to alter host cell physiology and promote bacterial survival in host tissues. Involved in the reorganization of late endosome/lysosome (LE/Lys) compartments in mammalian cells. Necessary and sufficient to link kinesin-1 onto the Salmonella-containing vacuole (SCV) membrane. Required for centrifugal extension of lysosomal glycoprotein-rich membrane tubules, known as Salmonella-induced filaments (Sifs), away from the SCV and toward the cell periphery. Required for virulence, but not for intracellular survival and replication in phagocytic cells. The polypeptide is Secreted effector protein PipB2 (pipB2) (Salmonella paratyphi A (strain ATCC 9150 / SARB42)).